A 235-amino-acid polypeptide reads, in one-letter code: Type III pantothenate kinase (235 aa).

6–13 (DVGNNYIK) contacts ATP. Substrate is bound by residues Y81 and 88–91 (GTDR). Residue D90 is the Proton acceptor of the active site. D111 serves as a coordination point for K(+). T114 lines the ATP pocket. T166 contributes to the substrate binding site.

This sequence belongs to the type III pantothenate kinase family. As to quaternary structure, homodimer. The cofactor is NH4(+). K(+) serves as cofactor.

It localises to the cytoplasm. It carries out the reaction (R)-pantothenate + ATP = (R)-4'-phosphopantothenate + ADP + H(+). Its pathway is cofactor biosynthesis; coenzyme A biosynthesis; CoA from (R)-pantothenate: step 1/5. Its function is as follows. Catalyzes the phosphorylation of pantothenate (Pan), the first step in CoA biosynthesis. The sequence is that of Type III pantothenate kinase from Cytophaga hutchinsonii (strain ATCC 33406 / DSM 1761 / CIP 103989 / NBRC 15051 / NCIMB 9469 / D465).